A 474-amino-acid chain; its full sequence is Putative pectinesterase/pectinesterase inhibitor 38 (474 aa).

The tract at residues 1 to 130 (MVFGNEMCDE…HSLESITIDV (130 aa)) is pectinesterase inhibitor 38. Residue N80 is glycosylated (N-linked (GlcNAc...) asparagine). A pectinesterase 38 region spans residues 164–461 (DVVVAQDGSG…TLPKFIDSAS (298 aa)). The substrate site is built by T241 and Q271. The Proton donor; for pectinesterase activity role is filled by D294. C308 and C328 are oxidised to a cystine. The active-site Nucleophile; for pectinesterase activity is the D315. Residue N351 is glycosylated (N-linked (GlcNAc...) asparagine). Substrate is bound by residues R380 and W382. N409 carries N-linked (GlcNAc...) asparagine glycosylation.

In the N-terminal section; belongs to the PMEI family. This sequence in the C-terminal section; belongs to the pectinesterase family.

The protein localises to the secreted. Its subcellular location is the cell wall. The enzyme catalyses [(1-&gt;4)-alpha-D-galacturonosyl methyl ester](n) + n H2O = [(1-&gt;4)-alpha-D-galacturonosyl](n) + n methanol + n H(+). It participates in glycan metabolism; pectin degradation; 2-dehydro-3-deoxy-D-gluconate from pectin: step 1/5. Acts in the modification of cell walls via demethylesterification of cell wall pectin. This is Putative pectinesterase/pectinesterase inhibitor 38 (PME38) from Arabidopsis thaliana (Mouse-ear cress).